A 604-amino-acid polypeptide reads, in one-letter code: Sulfite reductase [NADPH] flavoprotein alpha-component (604 aa).

The Flavodoxin-like domain maps to valine 66–alanine 204. FMN is bound by residues serine 72 to alanine 77, serine 119 to glycine 122, and leucine 155 to cysteine 164. An FAD-binding FR-type domain is found at alanine 239–proline 453. FAD-binding positions include threonine 327, glutamine 361, arginine 391 to serine 394, threonine 409 to glycine 411, and glycine 424 to serine 427. NADP(+)-binding positions include serine 524–arginine 525, lysine 530–glutamine 534, and aspartate 566. Position 604 (tyrosine 604) interacts with FAD.

Belongs to the NADPH-dependent sulphite reductase flavoprotein subunit CysJ family. The protein in the N-terminal section; belongs to the flavodoxin family. This sequence in the C-terminal section; belongs to the flavoprotein pyridine nucleotide cytochrome reductase family. As to quaternary structure, alpha(8)-beta(8). The alpha component is a flavoprotein, the beta component is a hemoprotein. It depends on FAD as a cofactor. FMN is required as a cofactor.

The enzyme catalyses hydrogen sulfide + 3 NADP(+) + 3 H2O = sulfite + 3 NADPH + 4 H(+). It functions in the pathway sulfur metabolism; hydrogen sulfide biosynthesis; hydrogen sulfide from sulfite (NADPH route): step 1/1. Component of the sulfite reductase complex that catalyzes the 6-electron reduction of sulfite to sulfide. This is one of several activities required for the biosynthesis of L-cysteine from sulfate. The flavoprotein component catalyzes the electron flow from NADPH -&gt; FAD -&gt; FMN to the hemoprotein component. This is Sulfite reductase [NADPH] flavoprotein alpha-component from Neisseria meningitidis serogroup B (strain ATCC BAA-335 / MC58).